The chain runs to 354 residues: Methionine import ATP-binding protein MetN (354 aa).

The region spanning 8 to 250 is the ABC transporter domain; that stretch reads LDHIDITFRQ…PKEALTQEFI (243 aa). ATP is bound at residue 42-49; sequence GYSGAGKS.

It belongs to the ABC transporter superfamily. Methionine importer (TC 3.A.1.24) family. In terms of assembly, the complex is composed of two ATP-binding proteins (MetN), two transmembrane proteins (MetI) and a solute-binding protein (MetQ).

Its subcellular location is the cell membrane. The catalysed reaction is L-methionine(out) + ATP + H2O = L-methionine(in) + ADP + phosphate + H(+). It carries out the reaction D-methionine(out) + ATP + H2O = D-methionine(in) + ADP + phosphate + H(+). In terms of biological role, part of the ABC transporter complex MetNIQ involved in methionine import. Responsible for energy coupling to the transport system. The sequence is that of Methionine import ATP-binding protein MetN from Streptococcus pyogenes serotype M1.